Consider the following 185-residue polypeptide: Putative lipoprotein LprB (185 aa).

The signal sequence occupies residues 1-24 (MRRKVRRLTLAVSALVALFPAVAG). Cysteine 25 carries the N-palmitoyl cysteine lipid modification. A lipid anchor (S-diacylglycerol cysteine) is attached at cysteine 25. The interval 26 to 50 (SDSGDNKPGATIPSTPANAEGRHGP) is disordered.

It localises to the cell membrane. The protein is Putative lipoprotein LprB (lprB) of Mycobacterium bovis (strain ATCC BAA-935 / AF2122/97).